Reading from the N-terminus, the 402-residue chain is Secreted RxLR effector protein 73 (402 aa).

A signal peptide spans Met-1–Ala-23. Asn-27 carries N-linked (GlcNAc...) asparagine glycosylation. The short motif at Arg-104–Arg-107 is the RxLR element. Residues Asn-111, Asn-134, Asn-143, Asn-165, and Asn-286 are each glycosylated (N-linked (GlcNAc...) asparagine).

Belongs to the RxLR effector family.

Its subcellular location is the secreted. It is found in the host cell. Its function is as follows. Secreted effector that completely suppresses the host cell death induced by cell death-inducing proteins. This is Secreted RxLR effector protein 73 from Plasmopara viticola (Downy mildew of grapevine).